Reading from the N-terminus, the 311-residue chain is Beta-lactamase (311 aa).

Residues 1-36 (MRKPTSSLTRRSVLGAGLGLGGALALGSTTASAASA) constitute a signal peptide (tat-type signal). The active-site Acyl-ester intermediate is Ser-86. 252–254 (KSG) is a substrate binding site.

The protein belongs to the class-A beta-lactamase family. In terms of processing, predicted to be exported by the Tat system. The position of the signal peptide cleavage has not been experimentally proven.

It carries out the reaction a beta-lactam + H2O = a substituted beta-amino acid. Hydrolyzes benzylpenicillin and cloxacillin (at 10% of the rate of benzylpenicillin). The protein is Beta-lactamase (bla) of Streptomyces cellulosae.